A 217-amino-acid chain; its full sequence is UPF0502 protein AHA_2872 (217 aa).

This sequence belongs to the UPF0502 family.

This is UPF0502 protein AHA_2872 from Aeromonas hydrophila subsp. hydrophila (strain ATCC 7966 / DSM 30187 / BCRC 13018 / CCUG 14551 / JCM 1027 / KCTC 2358 / NCIMB 9240 / NCTC 8049).